A 644-amino-acid chain; its full sequence is 3D-(3,5/4)-trihydroxycyclohexane-1,2-dione hydrolase (644 aa).

Position 65 (Glu-65) interacts with thiamine diphosphate. The segment at 442-522 is thiamine pyrophosphate binding; sequence SLPGDLQRMW…INVLLFDNSG (81 aa). Residues Asp-493 and Asn-520 each coordinate Mg(2+).

Belongs to the TPP enzyme family. It depends on Mg(2+) as a cofactor. Thiamine diphosphate is required as a cofactor.

It catalyses the reaction 3D-3,5/4-trihydroxycyclohexane-1,2-dione + H2O = 5-deoxy-D-glucuronate + H(+). It participates in polyol metabolism; myo-inositol degradation into acetyl-CoA; acetyl-CoA from myo-inositol: step 3/7. Functionally, involved in the cleavage of the C1-C2 bond of 3D-(3,5/4)-trihydroxycyclohexane-1,2-dione (THcHDO) to yield 5-deoxy-glucuronate (5DG). This is 3D-(3,5/4)-trihydroxycyclohexane-1,2-dione hydrolase from Bacillus anthracis (strain A0248).